We begin with the raw amino-acid sequence, 197 residues long: Probable nicotinate-nucleotide adenylyltransferase (197 aa).

This sequence belongs to the NadD family.

It catalyses the reaction nicotinate beta-D-ribonucleotide + ATP + H(+) = deamido-NAD(+) + diphosphate. It participates in cofactor biosynthesis; NAD(+) biosynthesis; deamido-NAD(+) from nicotinate D-ribonucleotide: step 1/1. Catalyzes the reversible adenylation of nicotinate mononucleotide (NaMN) to nicotinic acid adenine dinucleotide (NaAD). The polypeptide is Probable nicotinate-nucleotide adenylyltransferase (Bordetella parapertussis (strain 12822 / ATCC BAA-587 / NCTC 13253)).